Here is a 763-residue protein sequence, read N- to C-terminus: Phosphoglycerol transferase I (763 aa).

Transmembrane regions (helical) follow at residues M1–A21, W26–F46, I77–I97, and F108–F128.

Belongs to the OpgB family.

Its subcellular location is the cell inner membrane. It carries out the reaction a phosphatidylglycerol + a membrane-derived-oligosaccharide D-glucose = a 1,2-diacyl-sn-glycerol + a membrane-derived-oligosaccharide 6-(glycerophospho)-D-glucose.. It participates in glycan metabolism; osmoregulated periplasmic glucan (OPG) biosynthesis. Its function is as follows. Transfers a phosphoglycerol residue from phosphatidylglycerol to the membrane-bound nascent glucan backbones. This Escherichia coli (strain 55989 / EAEC) protein is Phosphoglycerol transferase I.